Consider the following 503-residue polypeptide: Probable cytosol aminopeptidase (503 aa).

Positions 270 and 275 each coordinate Mn(2+). Lys-282 is an active-site residue. Mn(2+) contacts are provided by Asp-293, Asp-352, and Glu-354. Arg-356 is an active-site residue.

This sequence belongs to the peptidase M17 family. Mn(2+) is required as a cofactor.

The protein resides in the cytoplasm. It carries out the reaction Release of an N-terminal amino acid, Xaa-|-Yaa-, in which Xaa is preferably Leu, but may be other amino acids including Pro although not Arg or Lys, and Yaa may be Pro. Amino acid amides and methyl esters are also readily hydrolyzed, but rates on arylamides are exceedingly low.. The enzyme catalyses Release of an N-terminal amino acid, preferentially leucine, but not glutamic or aspartic acids.. Functionally, presumably involved in the processing and regular turnover of intracellular proteins. Catalyzes the removal of unsubstituted N-terminal amino acids from various peptides. The sequence is that of Probable cytosol aminopeptidase from Pectobacterium atrosepticum (strain SCRI 1043 / ATCC BAA-672) (Erwinia carotovora subsp. atroseptica).